Here is a 95-residue protein sequence, read N- to C-terminus: Class II hydrophobin 3 (95 aa).

Positions 1-16 are cleaved as a signal peptide; it reads MKLLAVAALLAGAAIA. Cystine bridges form between Cys28–Cys77, Cys38–Cys68, Cys39–Cys51, and Cys78–Cys89.

It belongs to the cerato-ulmin hydrophobin family.

The protein resides in the secreted. Its subcellular location is the cell wall. Functionally, aerial growth, conidiation, and dispersal of filamentous fungi in the environment rely upon a capability of their secreting small amphipathic proteins called hydrophobins (HPBs) with low sequence identity. Class I can self-assemble into an outermost layer of rodlet bundles on aerial cell surfaces, conferring cellular hydrophobicity that supports fungal growth, development and dispersal; whereas Class II form highly ordered films at water-air interfaces through intermolecular interactions but contribute nothing to the rodlet structure. Hyd3 plays a neglectable role in hyphal growth and asexual development and does not seem involved in cellular hydrophobicity, conidial adhesion, stress tolerance nor insect pathogenicity. The protein is Class II hydrophobin 3 of Metarhizium robertsii (strain ARSEF 23 / ATCC MYA-3075) (Metarhizium anisopliae (strain ARSEF 23)).